A 553-amino-acid chain; its full sequence is Rhodopsin kinase GRK7 (553 aa).

A Phosphoserine; by PKA modification is found at serine 36. One can recognise an RGS domain in the interval 56–176 (FHSLCEQQPI…VTSAFYDKFL (121 aa)). One can recognise a Protein kinase domain in the interval 191–454 (FTEFRVLGKG…SDDPRKHHFF (264 aa)). Residues 197–205 (LGKGGFGEV) and lysine 220 contribute to the ATP site. The active-site Proton acceptor is the aspartate 316. The AGC-kinase C-terminal domain occupies 455–520 (KTINFPRLEA…GAVPIAWQEE (66 aa)). Cysteine methyl ester is present on cysteine 550. The S-geranylgeranyl cysteine moiety is linked to residue cysteine 550. A propeptide spans 551–553 (LLL) (removed in mature form).

Belongs to the protein kinase superfamily. AGC Ser/Thr protein kinase family. GPRK subfamily. Interacts (when prenylated) with PDE6D; this promotes release from membranes. Post-translationally, autophosphorylated in vitro at Ser-490. Phosphorylation at Ser-36 is regulated by light and activated by cAMP. In terms of tissue distribution, retinal cones, outer and inner segments.

It localises to the membrane. The catalysed reaction is L-threonyl-[rhodopsin] + ATP = O-phospho-L-threonyl-[rhodopsin] + ADP + H(+). The enzyme catalyses L-seryl-[rhodopsin] + ATP = O-phospho-L-seryl-[rhodopsin] + ADP + H(+). With respect to regulation, inhibited by phosphorylation of Ser-36. In terms of biological role, retina-specific kinase involved in the shutoff of the photoresponse and adaptation to changing light conditions via cone opsin phosphorylation, including rhodopsin (RHO). The protein is Rhodopsin kinase GRK7 (GRK7) of Homo sapiens (Human).